Consider the following 94-residue polypeptide: Large ribosomal subunit protein eL14 (94 aa).

Belongs to the eukaryotic ribosomal protein eL14 family.

The protein is Large ribosomal subunit protein eL14 of Methanopyrus kandleri (strain AV19 / DSM 6324 / JCM 9639 / NBRC 100938).